Reading from the N-terminus, the 741-residue chain is Catalase-peroxidase 2 (741 aa).

A signal peptide spans 1-28; it reads MQRNRIAKSVLAALAVIAMSAGSISARA. The segment at residues 107-228 is a cross-link (tryptophyl-tyrosyl-methioninium (Trp-Tyr) (with M-254)); the sequence is WHGAGTYRTY…LAATQMGLIY (122 aa). Residue His108 is the Proton acceptor of the active site. Positions 228–254 form a cross-link, tryptophyl-tyrosyl-methioninium (Tyr-Met) (with W-107); sequence YVNPEGPNGNPDPVAAAQDIREAFGRM. His269 is a binding site for heme b.

It belongs to the peroxidase family. Peroxidase/catalase subfamily. As to quaternary structure, homodimer or homotetramer. It depends on heme b as a cofactor. Post-translationally, formation of the three residue Trp-Tyr-Met cross-link is important for the catalase, but not the peroxidase activity of the enzyme.

It catalyses the reaction H2O2 + AH2 = A + 2 H2O. The catalysed reaction is 2 H2O2 = O2 + 2 H2O. Bifunctional enzyme with both catalase and broad-spectrum peroxidase activity. In Burkholderia vietnamiensis (strain G4 / LMG 22486) (Burkholderia cepacia (strain R1808)), this protein is Catalase-peroxidase 2.